A 512-amino-acid chain; its full sequence is MAEPSVESSSPGGSATSDDHEFDPSADMLVHDFDDERTLEEEEMMEGETNFSSEIEDLAREGDMPIHELLSLYGYGSTVRLPEEDEEEEEEEEEGEDDEDADNDDNSGCSGENKEENIKDSSGQEDETQSSNDDPSQSVASQDAQEIIRPRRCKYFDTNSEVEEESEEDEDYIPSEDWKKEIMVGSMFQAEIPVGICRYKENEKVYENDDQLLWDPEYLPEDKVIIFLKDASRRTGDEKGVEAIPEGSHIKDNEQALYELVKCNFDTEEALRRLRFNVKAAREELSVWTEEECRNFEQGLKAYGKDFHLIQANKVRTRSVGECVAFYYMWKKSERYDFFAQQTRFGKKKYNLHPGVTDYMDRLLDESESAASSRAPSPPPTASNSSNSQSEKEDGTVSTANQNGVSSNGPGEILNKEEVKVEGLHINGPTGGNKKPLHADMDTNGYETDNLTTDPKLAHMTARNENDFDEKSERPAKRRRVNSNGKESPGSSEFFQEAVSHGKFEELENTDD.

Over residues 1-16 (MAEPSVESSSPGGSAT) the composition is skewed to low complexity. 2 disordered regions span residues 1-63 (MAEP…REGD) and 75-173 (YGST…EDYI). Residue Ser10 is modified to Phosphoserine. The segment covering 17–36 (SDDHEFDPSADMLVHDFDDE) has biased composition (basic and acidic residues). 2 stretches are compositionally biased toward acidic residues: residues 37-46 (RTLEEEEMME) and 83-105 (EEDE…DNDD). The span at 129 to 144 (QSSNDDPSQSVASQDA) shows a compositional bias: polar residues. Phosphoserine is present on Ser141. At Tyr155 the chain carries Phosphotyrosine. Phosphoserine is present on residues Ser160 and Ser166. Residues 160–173 (SEVEEESEEDEDYI) show a composition bias toward acidic residues. Positions 180–278 (KEIMVGSMFQ…EALRRLRFNV (99 aa)) constitute an ELM2 domain. The interaction with HDAC1 stretch occupies residues 180–284 (KEIMVGSMFQ…RFNVKAAREE (105 aa)). A Glycyl lysine isopeptide (Lys-Gly) (interchain with G-Cter in SUMO2) cross-link involves residue Lys239. The SANT domain maps to 283–335 (EELSVWTEEECRNFEQGLKAYGKDFHLIQANKVRTRSVGECVAFYYMWKKSER). A disordered region spans residues 366–512 (ESESAASSRA…KFEELENTDD (147 aa)). Phosphoserine is present on residues Ser367, Ser369, and Ser377. Residues 396–409 (TVSTANQNGVSSNG) show a composition bias toward polar residues. Basic and acidic residues predominate over residues 414–423 (LNKEEVKVEG). Lys420 is covalently cross-linked (Glycyl lysine isopeptide (Lys-Gly) (interchain with G-Cter in SUMO2)). Thr448 carries the phosphothreonine modification. The segment covering 462 to 475 (ARNENDFDEKSERP) has biased composition (basic and acidic residues). A compositionally biased stretch (polar residues) spans 482–494 (NSNGKESPGSSEF). A phosphoserine mark is found at Ser483, Ser488, and Ser491.

As to quaternary structure, interacts with HDAC1. Part of a complex containing at least CDYL, MIER1, MIER2, HDAC1 and HDAC2. In terms of tissue distribution, ubiquitously expressed, but at very low levels. However, consistent level of expression are observed in heart, testis, thyroid, ovary and adrenal gland. Transcripts are up-regulated in breast carcinoma cell lines and tumor.

The protein localises to the nucleus. The protein resides in the cytoplasm. In terms of biological role, transcriptional repressor regulating the expression of a number of genes including SP1 target genes. Probably functions through recruitment of HDAC1 a histone deacetylase involved in chromatin silencing. The protein is Mesoderm induction early response protein 1 (MIER1) of Homo sapiens (Human).